Reading from the N-terminus, the 504-residue chain is Peptidyl-prolyl cis-trans isomerase CYP57 (504 aa).

Serine 2 is subject to N-acetylserine. The 152-residue stretch at 16-167 folds into the PPIase cyclophilin-type domain; the sequence is IVNTTHGPID…DPAPKILSVE (152 aa). Residues 204–274 adopt a coiled-coil conformation; the sequence is NLLSFGEEAE…AKKEAAQKDK (71 aa). 3 stretches are compositionally biased toward basic and acidic residues: residues 237–275, 344–354, and 364–374; these read RLLK…KDKS, EDEKPRMEKLS, and AKAEHMEKGDT. 3 disordered regions span residues 237–374, 416–441, and 482–504; these read RLLK…KGDT, AKPF…KEED, and EKFN…KSLA. The span at 416 to 434 shows a compositional bias: polar residues; it reads AKPFTSSNEPVVLTSSSEP. Positions 494 to 504 are enriched in basic and acidic residues; sequence REREWSGKSLA.

Belongs to the cyclophilin-type PPIase family. As to expression, ubiquitous.

Its subcellular location is the nucleus. The protein resides in the cytoplasm. The enzyme catalyses [protein]-peptidylproline (omega=180) = [protein]-peptidylproline (omega=0). Functionally, PPIases accelerate the folding of proteins. It catalyzes the cis-trans isomerization of proline imidic peptide bonds in oligopeptides. Involved in plant response to pathogen infection by increasing PAD4 expression in absence of EDS1 up-regulation. The chain is Peptidyl-prolyl cis-trans isomerase CYP57 (CYP57) from Arabidopsis thaliana (Mouse-ear cress).